The sequence spans 368 residues: Zinc finger protein 24 (368 aa).

Lys22 is covalently cross-linked (Glycyl lysine isopeptide (Lys-Gly) (interchain with G-Cter in SUMO2)). A Glycyl lysine isopeptide (Lys-Gly) (interchain with G-Cter in SUMO1); alternate cross-link involves residue Lys27. Lys27 participates in a covalent cross-link: Glycyl lysine isopeptide (Lys-Gly) (interchain with G-Cter in SUMO2); alternate. One can recognise an SCAN box domain in the interval 52–134 (RQRFRQFGYQ…AVLEDLESEL (83 aa)). Phosphoserine occurs at positions 132 and 142. Glycyl lysine isopeptide (Lys-Gly) (interchain with G-Cter in SUMO2) cross-links involve residues Lys147, Lys177, and Lys236. A C2H2-type 1 zinc finger spans residues 251–273 (HICDECGKHFSQGSALILHQRIH). The tract at residues 251–301 (HICDECGKHFSQGSALILHQRIHSGEKPYGCVECGKAFSRSSILVQHQRVH) is necessary and sufficient for nuclear localization. Ser274 is modified (phosphoserine). Glycyl lysine isopeptide (Lys-Gly) (interchain with G-Cter in SUMO2) cross-links involve residues Lys277 and Lys286. 3 consecutive C2H2-type zinc fingers follow at residues 279 to 301 (YGCV…QRVH), 307 to 329 (YKCL…QRIH), and 335 to 357 (YECV…QRRH). Ser292 carries the post-translational modification Phosphoserine. At Tyr335 the chain carries Phosphotyrosine. Residues Lys361 and Lys367 each participate in a glycyl lysine isopeptide (Lys-Gly) (interchain with G-Cter in SUMO2) cross-link.

The protein belongs to the krueppel C2H2-type zinc-finger protein family. Post-translationally, sumoylated. As to expression, widely expressed with highest levels in heart, brain, liver, skeletal muscle, kidney and testis and very low levels in spleen and lung.

Its subcellular location is the nucleus. Functionally, transcription factor required for myelination of differentiated oligodendrocytes. Required for the conversion of oligodendrocytes from the premyelinating to the myelinating state. In the developing central nervous system (CNS), involved in the maintenance in the progenitor stage by promoting the cell cycle. Specifically binds to the 5'-TCAT-3' DNA sequence. Has transcription repressor activity in vitro. This Mus musculus (Mouse) protein is Zinc finger protein 24.